Here is a 1450-residue protein sequence, read N- to C-terminus: DNA-directed RNA polymerase III subunit rpc1 (1450 aa).

Cysteine 67, cysteine 70, cysteine 77, histidine 80, cysteine 107, cysteine 110, and cysteine 154 together coordinate Zn(2+). Residues aspartate 491, aspartate 493, and aspartate 495 each contribute to the Mg(2+) site. Residues proline 832–glutamate 844 are bridging helix.

This sequence belongs to the RNA polymerase beta' chain family. As to quaternary structure, component of the RNA polymerase III (Pol III) complex consisting of 17 subunits.

Its subcellular location is the nucleus. It catalyses the reaction RNA(n) + a ribonucleoside 5'-triphosphate = RNA(n+1) + diphosphate. Functionally, DNA-dependent RNA polymerase catalyzes the transcription of DNA into RNA using the four ribonucleoside triphosphates as substrates. Largest and catalytic core component of RNA polymerase III which synthesizes small RNAs, such as 5S rRNA and tRNAs. Forms the polymerase active center together with the second largest subunit. A single-stranded DNA template strand of the promoter is positioned within the central active site cleft of Pol III. A bridging helix emanates from RPC1 and crosses the cleft near the catalytic site and is thought to promote translocation of Pol III by acting as a ratchet that moves the RNA-DNA hybrid through the active site by switching from straight to bent conformations at each step of nucleotide addition. The protein is DNA-directed RNA polymerase III subunit rpc1 (polr3a) of Dictyostelium discoideum (Social amoeba).